Consider the following 755-residue polypeptide: Anaphase-promoting complex subunit 5 (755 aa).

Ser195 carries the post-translational modification Phosphoserine. TPR repeat units lie at residues 209–249 (QKQA…FNPD), 250–300 (FAEA…GRSL), 301–337 (RYAA…SNDH), 338–378 (VCLQ…YLAS), 379–418 (LGIQ…SELI), 419–466 (DISI…TESF), 467–500 (AVAL…FPPN), 501–540 (SQHA…ALNS), 541–580 (IEGV…TEMV), 581–620 (ISVL…QYLA), 621–660 (SETV…ILDK), 661–696 (GRAM…NLNE), and 697–736 (AKNY…CAML). At Thr232 the chain carries Phosphothreonine.

It belongs to the APC5 family. The mammalian APC/C is composed at least of 14 distinct subunits ANAPC1, ANAPC2, CDC27/APC3, ANAPC4, ANAPC5, CDC16/APC6, ANAPC7, CDC23/APC8, ANAPC10, ANAPC11, CDC26/APC12, ANAPC13, ANAPC15 and ANAPC16 that assemble into a complex of at least 19 chains with a combined molecular mass of around 1.2 MDa; APC/C interacts with FZR1 and FBXO5.

It localises to the nucleus. The protein resides in the cytoplasm. It is found in the cytoskeleton. Its subcellular location is the spindle. It functions in the pathway protein modification; protein ubiquitination. Functionally, component of the anaphase promoting complex/cyclosome (APC/C), a cell cycle-regulated E3 ubiquitin ligase that controls progression through mitosis and the G1 phase of the cell cycle. The APC/C complex acts by mediating ubiquitination and subsequent degradation of target proteins: it mainly mediates the formation of 'Lys-11'-linked polyubiquitin chains and, to a lower extent, the formation of 'Lys-48'- and 'Lys-63'-linked polyubiquitin chains. The APC/C complex catalyzes assembly of branched 'Lys-11'-/'Lys-48'-linked branched ubiquitin chains on target proteins. This chain is Anaphase-promoting complex subunit 5 (ANAPC5), found in Homo sapiens (Human).